The primary structure comprises 178 residues: Orotate phosphoribosyltransferase (178 aa).

Residues R92, K93, K96, and 118 to 126 (EDVITTGSS) each bind 5-phospho-alpha-D-ribose 1-diphosphate. Positions 122 and 150 each coordinate orotate.

The protein belongs to the purine/pyrimidine phosphoribosyltransferase family. PyrE subfamily. In terms of assembly, homodimer. The cofactor is Mg(2+).

The catalysed reaction is orotidine 5'-phosphate + diphosphate = orotate + 5-phospho-alpha-D-ribose 1-diphosphate. It participates in pyrimidine metabolism; UMP biosynthesis via de novo pathway; UMP from orotate: step 1/2. In terms of biological role, catalyzes the transfer of a ribosyl phosphate group from 5-phosphoribose 1-diphosphate to orotate, leading to the formation of orotidine monophosphate (OMP). The protein is Orotate phosphoribosyltransferase of Archaeoglobus fulgidus (strain ATCC 49558 / DSM 4304 / JCM 9628 / NBRC 100126 / VC-16).